The following is a 108-amino-acid chain: Ig kappa chain V-V region HP 93G7 (108 aa).

A framework-1 region spans residues 1-23; the sequence is DIQMTQTTSSLSASLGDRVTISC. Residues Cys23 and Cys88 are joined by a disulfide bond. Residues 24-34 form a complementarity-determining-1 region; it reads RASQDISNYLN. A framework-2 region spans residues 35–49; it reads WYQQKPDGTVKLLIY. The complementarity-determining-2 stretch occupies residues 50 to 56; it reads YTSRLHS. The interval 57 to 88 is framework-3; sequence GVPSRFSGSGSGTDYSLTISNLEQEDIATYFC. Positions 89-97 are complementarity-determining-3; the sequence is QQGNMLPRT. Residues 98 to 108 form a framework-4 region; that stretch reads FGGGTKLEIKR.

The sequence is that of Ig kappa chain V-V region HP 93G7 from Mus musculus (Mouse).